The following is a 787-amino-acid chain: Probable basic-leucine zipper transcription factor J (787 aa).

Low complexity predominate over residues 18 to 90 (NSNIHNNTHN…NNTQNTNNGT (73 aa)). Disordered regions lie at residues 18-95 (NSNI…LTPL), 153-173 (LNLSSTGNHEDPVQVPMNNNP), 186-306 (LQSQ…NNNT), 343-372 (DSLLNQTLNNNNNNNNNNNNNNNNTTIQTS), 401-441 (LSSA…NNSN), and 473-507 (ASSESAQSESSQESDYDALNERNSGVKKRGRDEDQ). Low complexity-rich tracts occupy residues 186 to 223 (LQSQNNNSSNNNNNNNNNGSNTPLNGSNGSNNNYSSPI), 235 to 258 (SSPIQEYPYYSPSSSPHSNESTSP), 273 to 305 (NNNNNNNNNNNNNNNNNNNNNNNNNNKNNLNNN), and 351 to 366 (NNNNNNNNNNNNNNNN). Low complexity predominate over residues 473 to 483 (ASSESAQSESS). A bZIP domain is found at 549–612 (ELKKQRRLVK…KALKKQLYSL (64 aa)). The basic motif stretch occupies residues 551–603 (KKQRRLVKNREYASQSRSRRKIYVENIETKLQKTNQDCASIKSQLNSVKEENK). The segment at 605–612 (LKKQLYSL) is leucine-zipper. Disordered stretches follow at residues 723-747 (SNYIINNNNNESTSETTTNNKVVST) and 763-787 (DKEVPQKCKDSSDLKCDSPPLSPLN). A compositionally biased stretch (basic and acidic residues) spans 763-778 (DKEVPQKCKDSSDLKC).

The protein belongs to the bZIP family.

The protein localises to the nucleus. Its function is as follows. Probable transcriptional regulator. The polypeptide is Probable basic-leucine zipper transcription factor J (bzpJ) (Dictyostelium discoideum (Social amoeba)).